Here is a 651-residue protein sequence, read N- to C-terminus: Endo-1,4-beta-xylanase A (651 aa).

The signal sequence occupies residues 1 to 30; it reads MKRKVKKMAAMATSIIMAIMIILHSIPVLA. The GH11 domain maps to 33 to 227; sequence IIYDNETGTH…SSGYANVYKN (195 aa). Residue Glu124 is the Nucleophile of the active site. The active-site Proton donor is Glu214. CBM6 domains follow at residues 250-370, 387-507, and 527-647; these read SIIE…FIFS, SIIQ…FVFT, and SNIQ…FVFS. Positions 253 and 255 each coordinate Ca(2+). Thr270 serves as a coordination point for D-xylotriose. Residue Arg275 coordinates Ca(2+). Repeat unit 1 spans residues 278–339; the sequence is GYIENGNTVT…SSTGSWNTYQ (62 aa). Residues 278–616 are 3 X 61 AA approximate repeats; sequence GYIENGNTVT…GSTGSFDTYR (339 aa). D-xylotriose contacts are provided by Tyr279, Asn336, and Asn363. D-xylobiose-binding residues include Tyr279, Asn336, and Asn363. Asp365 contacts Ca(2+). Repeat 2 spans residues 415-476; sequence GYIENGYSTT…PSTNSWDSYQ (62 aa). Residues Gln530, Glu532, and Ser552 each contribute to the Ca(2+) site. Copy 3 of the repeat occupies 555–616; it reads GYIENGYSTT…GSTGSFDTYR (62 aa). 3 residues coordinate D-xylotriose: Tyr556, Asp613, and Asn640. Residue Asp642 participates in Ca(2+) binding.

It belongs to the glycosyl hydrolase 11 (cellulase G) family.

It is found in the secreted. It carries out the reaction Endohydrolysis of (1-&gt;4)-beta-D-xylosidic linkages in xylans.. The protein operates within glycan degradation; xylan degradation. Endoxylanase that degrades arabinoxylan and glucuronoxylan to xylobiose and xylotriose (in vitro). The chain is Endo-1,4-beta-xylanase A (xynA) from Thermoclostridium stercorarium (Clostridium stercorarium).